A 363-amino-acid chain; its full sequence is Chorismate synthase (363 aa).

NADP(+) contacts are provided by arginine 48 and arginine 54. FMN is bound by residues 131 to 133 (RSS), 244 to 245 (NA), glycine 288, 303 to 307 (KPTSS), and arginine 329.

This sequence belongs to the chorismate synthase family. Homotetramer. FMNH2 is required as a cofactor.

It catalyses the reaction 5-O-(1-carboxyvinyl)-3-phosphoshikimate = chorismate + phosphate. Its pathway is metabolic intermediate biosynthesis; chorismate biosynthesis; chorismate from D-erythrose 4-phosphate and phosphoenolpyruvate: step 7/7. In terms of biological role, catalyzes the anti-1,4-elimination of the C-3 phosphate and the C-6 proR hydrogen from 5-enolpyruvylshikimate-3-phosphate (EPSP) to yield chorismate, which is the branch point compound that serves as the starting substrate for the three terminal pathways of aromatic amino acid biosynthesis. This reaction introduces a second double bond into the aromatic ring system. The protein is Chorismate synthase of Maricaulis maris (strain MCS10) (Caulobacter maris).